A 396-amino-acid chain; its full sequence is tRNA-specific 2-thiouridylase MnmA (396 aa).

ATP is bound by residues 42–49 (GMSGGVDS) and M68. The tract at residues 128 to 130 (NPD) is interaction with target base in tRNA. C133 serves as the catalytic Nucleophile. A disulfide bridge connects residues C133 and C230. Position 158 (G158) interacts with ATP. An interaction with tRNA region spans residues 180–182 (KDQ). The active-site Cysteine persulfide intermediate is C230. Positions 342–343 (RY) are interaction with tRNA.

The protein belongs to the MnmA/TRMU family.

It localises to the cytoplasm. The catalysed reaction is S-sulfanyl-L-cysteinyl-[protein] + uridine(34) in tRNA + AH2 + ATP = 2-thiouridine(34) in tRNA + L-cysteinyl-[protein] + A + AMP + diphosphate + H(+). In terms of biological role, catalyzes the 2-thiolation of uridine at the wobble position (U34) of tRNA, leading to the formation of s(2)U34. In Pseudoalteromonas atlantica (strain T6c / ATCC BAA-1087), this protein is tRNA-specific 2-thiouridylase MnmA.